The chain runs to 130 residues: Large ribosomal subunit protein bL17 (130 aa).

The protein belongs to the bacterial ribosomal protein bL17 family. Part of the 50S ribosomal subunit. Contacts protein L32.

The sequence is that of Large ribosomal subunit protein bL17 from Azotobacter vinelandii (strain DJ / ATCC BAA-1303).